Here is a 214-residue protein sequence, read N- to C-terminus: Adenylate kinase (214 aa).

10-15 contacts ATP; it reads GAGKGT. Residues 30–59 are NMP; it reads STGDMLRAAVKAGTPLGVKAQEIMIQGGLV. Residues T31, R36, 57–59, 85–88, and Q92 each bind AMP; these read GLV and GFPR. Positions 126–163 are LID; that stretch reads GRRSCSSCGKGYHLVFDPPLRAGVCDVCGSGLVQRADD. ATP is bound at residue R127. Zn(2+) contacts are provided by C130, C133, C150, and C153. AMP is bound by residues R160 and R171. G199 contributes to the ATP binding site.

This sequence belongs to the adenylate kinase family. In terms of assembly, monomer.

It is found in the cytoplasm. The enzyme catalyses AMP + ATP = 2 ADP. The protein operates within purine metabolism; AMP biosynthesis via salvage pathway; AMP from ADP: step 1/1. Its function is as follows. Catalyzes the reversible transfer of the terminal phosphate group between ATP and AMP. Plays an important role in cellular energy homeostasis and in adenine nucleotide metabolism. This Trichlorobacter lovleyi (strain ATCC BAA-1151 / DSM 17278 / SZ) (Geobacter lovleyi) protein is Adenylate kinase.